A 210-amino-acid polypeptide reads, in one-letter code: Protein GrpE (210 aa).

Disordered regions lie at residues 1–40 and 191–210; these read MTDDTTKNGPDATAADAAADATAYVENETAQQEPAQPDPI and KGGPKPAEAETNSVFDEKDA. A compositionally biased stretch (low complexity) spans 11 to 23; that stretch reads DATAADAAADATA.

Belongs to the GrpE family. As to quaternary structure, homodimer.

Its subcellular location is the cytoplasm. In terms of biological role, participates actively in the response to hyperosmotic and heat shock by preventing the aggregation of stress-denatured proteins, in association with DnaK and GrpE. It is the nucleotide exchange factor for DnaK and may function as a thermosensor. Unfolded proteins bind initially to DnaJ; upon interaction with the DnaJ-bound protein, DnaK hydrolyzes its bound ATP, resulting in the formation of a stable complex. GrpE releases ADP from DnaK; ATP binding to DnaK triggers the release of the substrate protein, thus completing the reaction cycle. Several rounds of ATP-dependent interactions between DnaJ, DnaK and GrpE are required for fully efficient folding. In Rhizobium johnstonii (strain DSM 114642 / LMG 32736 / 3841) (Rhizobium leguminosarum bv. viciae), this protein is Protein GrpE.